A 366-amino-acid polypeptide reads, in one-letter code: 1-deoxy-D-xylulose 5-phosphate reductoisomerase (366 aa).

Residues Thr-7, Gly-8, Ser-9, Ile-10, Gly-31, Lys-32, Asn-33, and Asn-113 each coordinate NADPH. Residue Lys-114 coordinates 1-deoxy-D-xylulose 5-phosphate. An NADPH-binding site is contributed by Glu-115. Mn(2+) is bound at residue Asp-133. 1-deoxy-D-xylulose 5-phosphate contacts are provided by Ser-134, Glu-135, Ser-158, and His-181. Glu-135 provides a ligand contact to Mn(2+). NADPH is bound at residue Gly-187. 4 residues coordinate 1-deoxy-D-xylulose 5-phosphate: Ser-194, Asn-199, Lys-200, and Glu-203. Glu-203 is a Mn(2+) binding site.

It belongs to the DXR family. Mg(2+) is required as a cofactor. The cofactor is Mn(2+).

It carries out the reaction 2-C-methyl-D-erythritol 4-phosphate + NADP(+) = 1-deoxy-D-xylulose 5-phosphate + NADPH + H(+). The protein operates within isoprenoid biosynthesis; isopentenyl diphosphate biosynthesis via DXP pathway; isopentenyl diphosphate from 1-deoxy-D-xylulose 5-phosphate: step 1/6. In terms of biological role, catalyzes the NADPH-dependent rearrangement and reduction of 1-deoxy-D-xylulose-5-phosphate (DXP) to 2-C-methyl-D-erythritol 4-phosphate (MEP). The sequence is that of 1-deoxy-D-xylulose 5-phosphate reductoisomerase from Helicobacter pylori (strain G27).